Consider the following 220-residue polypeptide: Large ribosomal subunit protein uL16 (220 aa).

Belongs to the universal ribosomal protein uL16 family. Component of the small ribosomal subunit. Mature ribosomes consist of a small (40S) and a large (60S) subunit. The 40S subunit contains about 33 different proteins and 1 molecule of RNA (18S). The 60S subunit contains about 49 different proteins and 3 molecules of RNA (25S, 5.8S and 5S).

In Vitis riparia (Frost grape), this protein is Large ribosomal subunit protein uL16 (RPL10).